We begin with the raw amino-acid sequence, 897 residues long: Zinc finger protein zas1 (897 aa).

2 consecutive C2H2-type zinc fingers follow at residues 26-50 and 56-79; these read FYCT…ERTH and FSCS…QQMH. The C2H2-type 3; atypical zinc finger occupies 93–119; the sequence is ASCFLGFCVLAHDYVNLINARHFMIEH.

Its subcellular location is the nucleus. This is Zinc finger protein zas1 (zas1) from Schizosaccharomyces pombe (strain 972 / ATCC 24843) (Fission yeast).